Reading from the N-terminus, the 146-residue chain is uncharacterized protein (146 aa).

The region spanning leucine 7–proline 146 is the N-acetyltransferase domain.

This is an uncharacterized protein from Staphylococcus epidermidis (strain ATCC 35984 / DSM 28319 / BCRC 17069 / CCUG 31568 / BM 3577 / RP62A).